The following is a 513-amino-acid chain: ATP synthase subunit alpha 2 (513 aa).

Residue 169-176 coordinates ATP; sequence GDRQVGKT.

Belongs to the ATPase alpha/beta chains family. As to quaternary structure, F-type ATPases have 2 components, CF(1) - the catalytic core - and CF(0) - the membrane proton channel. CF(1) has five subunits: alpha(3), beta(3), gamma(1), delta(1), epsilon(1). CF(0) has three main subunits: a(1), b(2) and c(9-12). The alpha and beta chains form an alternating ring which encloses part of the gamma chain. CF(1) is attached to CF(0) by a central stalk formed by the gamma and epsilon chains, while a peripheral stalk is formed by the delta and b chains.

The protein localises to the cell inner membrane. It carries out the reaction ATP + H2O + 4 H(+)(in) = ADP + phosphate + 5 H(+)(out). Functionally, produces ATP from ADP in the presence of a proton gradient across the membrane. The alpha chain is a regulatory subunit. The sequence is that of ATP synthase subunit alpha 2 from Psychromonas ingrahamii (strain DSM 17664 / CCUG 51855 / 37).